The primary structure comprises 2021 residues: HEAT repeat-containing protein 5A (2021 aa).

HEAT repeat units lie at residues 795–836 and 1059–1096; these read SQRP…HLAS and VNLS…REAA. 2 disordered regions span residues 1503 to 1528 and 1989 to 2012; these read EGNG…LPAD and RGNQ…HGSP. The span at 1512–1522 shows a compositional bias: polar residues; sequence VTPTSMGQERG.

The protein belongs to the HEATR5 family.

In Xenopus tropicalis (Western clawed frog), this protein is HEAT repeat-containing protein 5A (heatr5a).